The chain runs to 205 residues: Probable GTP-binding protein EngB (205 aa).

The EngB-type G domain occupies 22–198 (HLPEYAFIGR…LSYIDEVNQD (177 aa)). Residues 30–37 (GRSNVGKS), 57–61 (GKTQL), 75–78 (DLPG), 142–145 (TKAD), and 177–179 (TSA) contribute to the GTP site. Mg(2+) contacts are provided by Ser37 and Thr59.

This sequence belongs to the TRAFAC class TrmE-Era-EngA-EngB-Septin-like GTPase superfamily. EngB GTPase family. Requires Mg(2+) as cofactor.

Functionally, necessary for normal cell division and for the maintenance of normal septation. The protein is Probable GTP-binding protein EngB of Flavobacterium psychrophilum (strain ATCC 49511 / DSM 21280 / CIP 103535 / JIP02/86).